The sequence spans 122 residues: Large ribosomal subunit protein uL14c (122 aa).

This sequence belongs to the universal ribosomal protein uL14 family. As to quaternary structure, part of the 50S ribosomal subunit.

The protein localises to the plastid. The protein resides in the chloroplast. Binds to 23S rRNA. The polypeptide is Large ribosomal subunit protein uL14c (Mesostigma viride (Green alga)).